The sequence spans 300 residues: Acetaldehyde dehydrogenase 3 (300 aa).

11-14 (SGNI) serves as a coordination point for NAD(+). The active-site Acyl-thioester intermediate is C126. Residues 157–165 (SAGPGTRAN) and N276 contribute to the NAD(+) site.

The protein belongs to the acetaldehyde dehydrogenase family.

The catalysed reaction is acetaldehyde + NAD(+) + CoA = acetyl-CoA + NADH + H(+). In Rhodococcus jostii (strain RHA1), this protein is Acetaldehyde dehydrogenase 3 (hsaG).